Reading from the N-terminus, the 292-residue chain is Protein CHLOROPLAST ENHANCING STRESS TOLERANCE, chloroplastic (292 aa).

Positions 1–15 are enriched in pro residues; it reads MALLSPPSPPPPLPP. The N-terminal 67 residues, 1-67, are a transit peptide targeting the chloroplast; it reads MALLSPPSPP…RSSRRRRRVA (67 aa). Disordered stretches follow at residues 1–119 and 206–225; these read MALL…DLED and MEAP…KATD. 2 stretches are compositionally biased toward low complexity: residues 49-58 and 94-107; these read STANARAYSR and ASSD…ASSA. The chain crosses the membrane as a helical span at residues 267–287; that stretch reads ALYLLTAFPVIIGISVVLILF.

Belongs to the Y3IP1/CEST family.

The protein localises to the plastid. It is found in the chloroplast thylakoid membrane. Involved in light-induced chloroplast development and growth. Involved in the plant response to abiotic and photooxidative stresses. May be involved in the suppression of photooxidative damage. This chain is Protein CHLOROPLAST ENHANCING STRESS TOLERANCE, chloroplastic, found in Oryza sativa subsp. indica (Rice).